Here is a 376-residue protein sequence, read N- to C-terminus: Alanine racemase (376 aa).

Residue K40 is the Proton acceptor; specific for D-alanine of the active site. K40 is subject to N6-(pyridoxal phosphate)lysine. R138 provides a ligand contact to substrate. Y270 acts as the Proton acceptor; specific for L-alanine in catalysis. A substrate-binding site is contributed by M317.

It belongs to the alanine racemase family. The cofactor is pyridoxal 5'-phosphate.

The catalysed reaction is L-alanine = D-alanine. The protein operates within amino-acid biosynthesis; D-alanine biosynthesis; D-alanine from L-alanine: step 1/1. Functionally, catalyzes the interconversion of L-alanine and D-alanine. May also act on other amino acids. The polypeptide is Alanine racemase (alr) (Lactobacillus delbrueckii subsp. bulgaricus (strain ATCC 11842 / DSM 20081 / BCRC 10696 / JCM 1002 / NBRC 13953 / NCIMB 11778 / NCTC 12712 / WDCM 00102 / Lb 14)).